A 346-amino-acid chain; its full sequence is Biotin synthase (346 aa).

The region spanning 41–265 (NEVQISTLLS…MMPHSYVRLS (225 aa)) is the Radical SAM core domain. [4Fe-4S] cluster is bound by residues C56, C60, and C63. 4 residues coordinate [2Fe-2S] cluster: C100, C131, C191, and R263.

This sequence belongs to the radical SAM superfamily. Biotin synthase family. As to quaternary structure, homodimer. [4Fe-4S] cluster is required as a cofactor. Requires [2Fe-2S] cluster as cofactor.

It catalyses the reaction (4R,5S)-dethiobiotin + (sulfur carrier)-SH + 2 reduced [2Fe-2S]-[ferredoxin] + 2 S-adenosyl-L-methionine = (sulfur carrier)-H + biotin + 2 5'-deoxyadenosine + 2 L-methionine + 2 oxidized [2Fe-2S]-[ferredoxin]. Its pathway is cofactor biosynthesis; biotin biosynthesis; biotin from 7,8-diaminononanoate: step 2/2. Functionally, catalyzes the conversion of dethiobiotin (DTB) to biotin by the insertion of a sulfur atom into dethiobiotin via a radical-based mechanism. This Pseudoalteromonas translucida (strain TAC 125) protein is Biotin synthase.